A 618-amino-acid polypeptide reads, in one-letter code: Uptake hydrogenase large subunit (618 aa).

Positions 75, 78, 597, and 600 each coordinate Ni(2+).

Belongs to the [NiFe]/[NiFeSe] hydrogenase large subunit family. Heterodimer of a large and a small subunit. It depends on Ni(2+) as a cofactor.

The protein localises to the cell membrane. It carries out the reaction H2 + A = AH2. Its function is as follows. This enzyme recycles the H(2) produced by nitrogenase to increase the production of ATP and to protect nitrogenase against inhibition or damage by O(2) under carbon- or phosphate-limited conditions. This is Uptake hydrogenase large subunit (hoxG) from Cupriavidus necator (strain ATCC 17699 / DSM 428 / KCTC 22496 / NCIMB 10442 / H16 / Stanier 337) (Ralstonia eutropha).